The sequence spans 158 residues: Small ribosomal subunit protein uS7 (158 aa).

Belongs to the universal ribosomal protein uS7 family. Part of the 30S ribosomal subunit. Contacts proteins S9 and S11.

One of the primary rRNA binding proteins, it binds directly to 16S rRNA where it nucleates assembly of the head domain of the 30S subunit. Is located at the subunit interface close to the decoding center, probably blocks exit of the E-site tRNA. In Bacteroides fragilis (strain YCH46), this protein is Small ribosomal subunit protein uS7.